The chain runs to 655 residues: MGKVIGIDLGTTNSCVAVLEGGKPIIVTNREGDRTTPSIVAVGRKGDRIVGRMAKRQAVTNAENTVYSIKRFIGRRWEDTEAERSRVTYTCVPGKDDTVNVTIRDRVCTPQEISAMVLQKLRQDAETFLGEPVTQAVITVPAYFTDAQRQATKDAGAIAGLEVLRIVNEPTAAALSYGLDKLHENSRILVFDLGGSTLDVSILQLGDSVFEVKATAGNNHLGGDDFDAVIVDWLADNFLKAESIDLRQDKMAIQRLREASEQAKIDLSTLPTTTINLPFIATATVDGAPEPKHIEVELQREQFEVLASNLVQATIEPIQQALKDSNLTIDQIDRILLVGGSSRIPAIQQAVQKFFGGKTPDLTINPDEAIALGAAIQAGVLGGEVKDVLLLDVIPLSLGLETLGGVFTKIIERNTTIPTSRTQVFTTATDGQVMVEVHVLQGERALVKDNKSLGRFQLTGIPPAPRGVPQIELAFDIDADGILNVSARDRGTGRAQGIRITSTGGLTSDEIEAMRRDAELYQEADQINLQMIELRTQFENLRYSFESTLQNNRELLTAEQQEPLEASLNALASGLESVSNEAELNQLRQQLEALKQQLYAIGAAAYRQDGSVTTIPVQPTFADLIGDNDNGSNETVAIERNDDDATVTADYEAIE.

A Phosphothreonine; by autocatalysis modification is found at Thr197.

This sequence belongs to the heat shock protein 70 family.

Its function is as follows. Acts as a chaperone. The protein is Chaperone protein dnaK1 (dnaK1) of Synechococcus elongatus (strain ATCC 33912 / PCC 7942 / FACHB-805) (Anacystis nidulans R2).